Here is a 382-residue protein sequence, read N- to C-terminus: Galactokinase (382 aa).

34–37 (EHTD) is a substrate binding site. 124 to 130 (GAGLSSS) contributes to the ATP binding site. Residues Ser130 and Glu162 each contribute to the Mg(2+) site. Asp174 functions as the Proton acceptor in the catalytic mechanism. Residue Tyr223 participates in substrate binding.

Belongs to the GHMP kinase family. GalK subfamily.

Its subcellular location is the cytoplasm. It carries out the reaction alpha-D-galactose + ATP = alpha-D-galactose 1-phosphate + ADP + H(+). The protein operates within carbohydrate metabolism; galactose metabolism. Catalyzes the transfer of the gamma-phosphate of ATP to D-galactose to form alpha-D-galactose-1-phosphate (Gal-1-P). The sequence is that of Galactokinase from Salmonella newport (strain SL254).